The following is a 337-amino-acid chain: Nucleoid-associated protein Avin_11450 (337 aa).

Belongs to the YejK family.

Its subcellular location is the cytoplasm. The protein localises to the nucleoid. This Azotobacter vinelandii (strain DJ / ATCC BAA-1303) protein is Nucleoid-associated protein Avin_11450.